A 957-amino-acid chain; its full sequence is Nitrite reductase [NAD(P)H] large subunit (957 aa).

FAD is bound at residue 44-79; sequence YDRVHLTEYFAGRSAESLSLVEGDFFTQHGIELRLS. 193–225 is a binding site for NAD(+); it reads LREKISELGVGVHTSKATTEIVRNEQGLQLNFR. [2Fe-2S] cluster-binding residues include cysteine 423, cysteine 425, cysteine 457, and cysteine 460. [4Fe-4S] cluster-binding residues include cysteine 639, cysteine 645, cysteine 679, and cysteine 683. Cysteine 683 serves as a coordination point for siroheme.

The protein belongs to the nitrite and sulfite reductase 4Fe-4S domain family. Homodimer which associates with NirD. The cofactor is siroheme. Requires [2Fe-2S] cluster as cofactor. [4Fe-4S] cluster serves as cofactor. FAD is required as a cofactor.

It carries out the reaction NH4(+) + 3 NADP(+) + 2 H2O = nitrite + 3 NADPH + 5 H(+). The catalysed reaction is NH4(+) + 3 NAD(+) + 2 H2O = nitrite + 3 NADH + 5 H(+). It participates in nitrogen metabolism; nitrate reduction (assimilation). The polypeptide is Nitrite reductase [NAD(P)H] large subunit (nasB) (Klebsiella oxytoca).